The primary structure comprises 360 residues: Phospho-N-acetylmuramoyl-pentapeptide-transferase (360 aa).

Residues 1 to 25 (MLVWLAEHLVKYYSGFNVFSYLTFR) lie on the Periplasmic side of the membrane. Residues 26 to 46 (AIVSLLTALFISLWMGPRMIA) form a helical membrane-spanning segment. Topologically, residues 47-71 (RLQKLSFGQVVRNDGPESHFSKRGT) are cytoplasmic. Residues 72–92 (PTMGGIMILTSIVISVLLWAY) traverse the membrane as a helical segment. Pro93 is a topological domain (periplasmic). A helical transmembrane segment spans residues 94–114 (SNPYVWCVLVVLIGYGIIGFV). At 115–131 (DDYRKVVRKDTKGLIAR) the chain is on the cytoplasmic side. The helical transmembrane segment at 132 to 152 (WKYFWMSVIALGVAFALYLVG) threads the bilayer. Residues 153–167 (KDTPATQLVVPFFKD) lie on the Periplasmic side of the membrane. A helical membrane pass occupies residues 168 to 188 (VMPQLGLFYILLSYFVIVGTG). At 189–198 (NAVNLTDGLD) the chain is on the cytoplasmic side. Residues 199–219 (GLAIMPTVFVAAGFALVAWAT) traverse the membrane as a helical segment. Topologically, residues 220 to 235 (GNMNFANYLHIPYLRH) are periplasmic. The chain crosses the membrane as a helical span at residues 236–256 (AGELVIVCTAIVGAGLGFLWF). At 257–262 (NTYPAQ) the chain is on the cytoplasmic side. A helical membrane pass occupies residues 263 to 283 (VFMGDVGSLALGGALGIIAVL). Residues 284–287 (LRQE) are Periplasmic-facing. The chain crosses the membrane as a helical span at residues 288-308 (FLLVIMGGVFVVETLSVILQV). Over 309–337 (GSFKLRGQRIFRMAPIHHHYELKGWPEPR) the chain is Cytoplasmic. A helical transmembrane segment spans residues 338 to 358 (VIVRFWIISLMLVLIGLATLK). Residues 359 to 360 (VR) lie on the Periplasmic side of the membrane.

Belongs to the glycosyltransferase 4 family. MraY subfamily. Mg(2+) is required as a cofactor.

It localises to the cell inner membrane. It carries out the reaction UDP-N-acetyl-alpha-D-muramoyl-L-alanyl-gamma-D-glutamyl-meso-2,6-diaminopimeloyl-D-alanyl-D-alanine + di-trans,octa-cis-undecaprenyl phosphate = di-trans,octa-cis-undecaprenyl diphospho-N-acetyl-alpha-D-muramoyl-L-alanyl-D-glutamyl-meso-2,6-diaminopimeloyl-D-alanyl-D-alanine + UMP. Its pathway is cell wall biogenesis; peptidoglycan biosynthesis. Functionally, catalyzes the initial step of the lipid cycle reactions in the biosynthesis of the cell wall peptidoglycan: transfers peptidoglycan precursor phospho-MurNAc-pentapeptide from UDP-MurNAc-pentapeptide onto the lipid carrier undecaprenyl phosphate, yielding undecaprenyl-pyrophosphoryl-MurNAc-pentapeptide, known as lipid I. The polypeptide is Phospho-N-acetylmuramoyl-pentapeptide-transferase (Salmonella gallinarum (strain 287/91 / NCTC 13346)).